A 109-amino-acid chain; its full sequence is Putative small proline-rich protein 2J (109 aa).

Tandem repeats lie at residues 21–29, 30–38, 39–47, 48–56, and 57–65. The 5 X 9 AA approximate tandem repeats stretch occupies residues 21-65; sequence RSAQSPVLCQSAPSLVLLQSAQSPIHCQSALSHAHLSHASRNALL. Positions 76–109 are disordered; that stretch reads AHPRANKGFSSLQNQKKRTESILHKSIATPPSSI.

It belongs to the cornifin (SPRR) family. Not expressed in uterus.

It is found in the cytoplasm. Functionally, cross-linked envelope protein of keratinocytes. It is a keratinocyte protein that first appears in the cell cytosol, but ultimately becomes cross-linked to membrane proteins by transglutaminase. All that results in the formation of an insoluble envelope beneath the plasma membrane. The polypeptide is Putative small proline-rich protein 2J (Sprr2j) (Mus musculus (Mouse)).